The sequence spans 342 residues: Apurinic-apyrimidinic endonuclease 1 (342 aa).

His61, Glu136, Asp170, His173, His207, Asp220, His222, and Glu252 together coordinate Zn(2+). Residues 299 to 310 (HLNKFEKKEAKK) are compositionally biased toward basic and acidic residues. The disordered stretch occupies residues 299–342 (HLNKFEKKEAKKDRKKKSKDGDQTTLLLRKKQKLGNAEVKSLDE).

It belongs to the AP endonuclease 2 family. The cofactor is Zn(2+).

Its subcellular location is the nucleus. DNA repair enzyme that cleaves apurinic/apyrimidinic (AP) sites and removes 3'-blocking groups present at single strand breaks of damaged DNA. Provides back-up AP endonuclease (APE) activity to apn2 together with uve1. This Schizosaccharomyces pombe (strain 972 / ATCC 24843) (Fission yeast) protein is Apurinic-apyrimidinic endonuclease 1 (apn1).